We begin with the raw amino-acid sequence, 774 residues long: Vezatin (774 aa).

Transmembrane regions (helical) follow at residues 138–158 and 163–183; these read IATP…AVAA and SISS…FTVL. Positions 430–457 form a coiled coil; sequence VRSLQLHLKALLNEVIVLEDELDKLSSC. Acidic residues predominate over residues 746–757; that stretch reads FGDEWDDDDDNE. The disordered stretch occupies residues 746–774; the sequence is FGDEWDDDDDNEDHDHDKERNNDSSQLEG. The segment covering 758 to 767 has biased composition (basic and acidic residues); that stretch reads DHDHDKERNN.

This sequence belongs to the vezatin family. In terms of assembly, interacts with myosin VIIa and the cadherin-catenins complex.

The protein localises to the cell membrane. It is found in the cell junction. It localises to the adherens junction. The protein resides in the nucleus. Plays a pivotal role in the establishment of adherens junctions and their maintenance in adult life. In Xenopus laevis (African clawed frog), this protein is Vezatin (vezt).